The chain runs to 300 residues: Epimerase family protein SAV0769 (300 aa).

Belongs to the NAD(P)-dependent epimerase/dehydratase family. SDR39U1 subfamily.

This is Epimerase family protein SAV0769 from Staphylococcus aureus (strain Mu50 / ATCC 700699).